Consider the following 311-residue polypeptide: 4-diphosphocytidyl-2-C-methyl-D-erythritol kinase (311 aa).

Residue Lys-13 is part of the active site. 114–124 (PVAGGMAGGSA) serves as a coordination point for ATP. Asp-156 is an active-site residue.

Belongs to the GHMP kinase family. IspE subfamily.

The enzyme catalyses 4-CDP-2-C-methyl-D-erythritol + ATP = 4-CDP-2-C-methyl-D-erythritol 2-phosphate + ADP + H(+). It participates in isoprenoid biosynthesis; isopentenyl diphosphate biosynthesis via DXP pathway; isopentenyl diphosphate from 1-deoxy-D-xylulose 5-phosphate: step 3/6. Functionally, catalyzes the phosphorylation of the position 2 hydroxy group of 4-diphosphocytidyl-2C-methyl-D-erythritol. The chain is 4-diphosphocytidyl-2-C-methyl-D-erythritol kinase from Corynebacterium diphtheriae (strain ATCC 700971 / NCTC 13129 / Biotype gravis).